The sequence spans 503 residues: Probable mitochondrial-processing peptidase subunit alpha-1, mitochondrial (503 aa).

Residues M1–P59 constitute a mitochondrion transit peptide.

This sequence belongs to the peptidase M16 family. In terms of assembly, heterodimer of alpha and beta subunits, forming the mitochondrial processing protease (MPP) in which subunit alpha is involved in substrate recognition and binding and subunit beta is the catalytic subunit. Component of the ubiquinol-cytochrome c oxidoreductase (cytochrome b-c1 complex, complex III, CIII), a multisubunit enzyme composed of 10 subunits. The complex is composed of 3 respiratory subunits cytochrome b (MT-CYB), cytochrome c1 (CYC1-1 or CYC1-2) and Rieske protein (UCR1-1 or UCR1-2), 2 core protein subunits MPPalpha1 (or MPPalpha2) and MPPB, and 5 low-molecular weight protein subunits QCR7-1 (or QCR7-2), UCRQ-1 (or UCRQ-2), QCR9, UCRY and probably QCR6-1 (or QCR6-2). The complex exists as an obligatory dimer and forms supercomplexes (SCs) in the inner mitochondrial membrane with NADH-ubiquinone oxidoreductase (complex I, CI), resulting in different assemblies (supercomplexes SCI(1)III(2) and SCI(2)III(4)).

It is found in the mitochondrion matrix. Its subcellular location is the mitochondrion inner membrane. Functionally, substrate recognition and binding subunit of the essential mitochondrial processing protease (MPP), which cleaves the mitochondrial sequence off newly imported precursors proteins. Component of the ubiquinol-cytochrome c oxidoreductase, a multisubunit transmembrane complex that is part of the mitochondrial electron transport chain which drives oxidative phosphorylation. The respiratory chain contains 3 multisubunit complexes succinate dehydrogenase (complex II, CII), ubiquinol-cytochrome c oxidoreductase (cytochrome b-c1 complex, complex III, CIII) and cytochrome c oxidase (complex IV, CIV), that cooperate to transfer electrons derived from NADH and succinate to molecular oxygen, creating an electrochemical gradient over the inner membrane that drives transmembrane transport and the ATP synthase. The cytochrome b-c1 complex catalyzes electron transfer from ubiquinol to cytochrome c, linking this redox reaction to translocation of protons across the mitochondrial inner membrane, with protons being carried across the membrane as hydrogens on the quinol. In the process called Q cycle, 2 protons are consumed from the matrix, 4 protons are released into the intermembrane space and 2 electrons are passed to cytochrome c. The sequence is that of Probable mitochondrial-processing peptidase subunit alpha-1, mitochondrial (MPPalpha1) from Arabidopsis thaliana (Mouse-ear cress).